The sequence spans 397 residues: Tryptophan synthase beta chain (397 aa).

The residue at position 89 (Lys89) is an N6-(pyridoxal phosphate)lysine.

Belongs to the TrpB family. As to quaternary structure, tetramer of two alpha and two beta chains. Requires pyridoxal 5'-phosphate as cofactor.

It catalyses the reaction (1S,2R)-1-C-(indol-3-yl)glycerol 3-phosphate + L-serine = D-glyceraldehyde 3-phosphate + L-tryptophan + H2O. It participates in amino-acid biosynthesis; L-tryptophan biosynthesis; L-tryptophan from chorismate: step 5/5. The beta subunit is responsible for the synthesis of L-tryptophan from indole and L-serine. This is Tryptophan synthase beta chain from Leptospira interrogans serogroup Icterohaemorrhagiae serovar copenhageni (strain Fiocruz L1-130).